Here is a 125-residue protein sequence, read N- to C-terminus: Small ribosomal subunit protein uS12 (125 aa).

At aspartate 89 the chain carries 3-methylthioaspartic acid. The disordered stretch occupies residues 105 to 125; sequence QGVKDRKQSRSKYGAKKPKAK. Over residues 113 to 125 the composition is skewed to basic residues; the sequence is SRSKYGAKKPKAK.

The protein belongs to the universal ribosomal protein uS12 family. In terms of assembly, part of the 30S ribosomal subunit. Contacts proteins S8 and S17. May interact with IF1 in the 30S initiation complex.

Functionally, with S4 and S5 plays an important role in translational accuracy. In terms of biological role, interacts with and stabilizes bases of the 16S rRNA that are involved in tRNA selection in the A site and with the mRNA backbone. Located at the interface of the 30S and 50S subunits, it traverses the body of the 30S subunit contacting proteins on the other side and probably holding the rRNA structure together. The combined cluster of proteins S8, S12 and S17 appears to hold together the shoulder and platform of the 30S subunit. This is Small ribosomal subunit protein uS12 from Delftia acidovorans (strain DSM 14801 / SPH-1).